Consider the following 279-residue polypeptide: Thioredoxin-like 1-1, chloroplastic (279 aa).

Residues 56 to 202 form the Thioredoxin domain; it reads ALTERKARPL…FKDALAKHGP (147 aa). Catalysis depends on nucleophile residues cysteine 125 and cysteine 128. Cysteines 125 and 128 form a disulfide.

It belongs to the thioredoxin family.

Probable thiol-disulfide oxidoreductase that may participate in various redox reactions. The chain is Thioredoxin-like 1-1, chloroplastic from Oryza sativa subsp. japonica (Rice).